Consider the following 496-residue polypeptide: 4-O-methyl-glucuronoyl methylesterase 1 (496 aa).

Positions 1-19 (MKSTVASALLVLAGTAVQA) are cleaved as a signal peptide. Positions 20–55 (QSGPWQQCGGIGWQGPFTCVSGHTCQVLNDWYHQCV) constitute a CBM1 domain. The tract at residues 57-151 (GGGPSPPPTS…RLPDPFTFHN (95 aa)) is disordered. Over residues 59–125 (GPSPPPTSPP…SPPPTSPPPS (67 aa)) the composition is skewed to pro residues. Disulfide bonds link Cys129–Cys163, Cys307–Cys443, and Cys339–Cys415. Residues 306–311 (GCSRNG) carry the GXSYXG catalytic site motif motif. Residue Ser308 is the Nucleophile of the active site. Lys312, Gln354, Glu362, and Trp406 together coordinate substrate. Residue His442 is the Proton donor/acceptor of the active site.

The protein belongs to the carbohydrate esterase 15 (CE15) family.

The protein localises to the secreted. The enzyme catalyses a 4-O-methyl-alpha-D-glucuronosyl ester derivative + H2O = 4-O-methyl-alpha-D-glucuronate derivative + an alcohol + H(+). In terms of biological role, glucuronoyl esterase which may play a significant role in biomass degradation, as it is considered to disconnect hemicellulose from lignin through the hydrolysis of the ester bond between 4-O-methyl-D-glucuronic acid residues of glucuronoxylans and aromatic alcohols of lignin. Cleaves native lignin-carbohydrate (LC) ester bonds from LC complex preparations of spruce (softwood) and birch (hardwood), containing mainly hemicelluloses with partially acetylated glucomannans in spruce and partially acetylated xylan in birch. Can hydrolyze benzyl glucuronic acid (BnGlcA), allyl glucuronic acid (allylGlcA) and to a lower degree methyl glucuronic acid (MeGlcA) in vitro. This chain is 4-O-methyl-glucuronoyl methylesterase 1, found in Sodiomyces alcalophilus (Acremonium alcalophilum).